The chain runs to 684 residues: Chaperone protein HtpG (684 aa).

The tract at residues 1 to 329 is a; substrate-binding; that stretch reads MSKKGTIGVT…SPDIPLNVSR (329 aa). A b region spans residues 330–548; the sequence is SYLQSDANVK…FMRRMRDMAQ (219 aa). Residues 549–684 form a c region; it reads LQPGMSFYGE…EFIRRSQRLL (136 aa).

This sequence belongs to the heat shock protein 90 family. In terms of assembly, homodimer.

It localises to the cytoplasm. Functionally, molecular chaperone. Has ATPase activity. In Porphyromonas gingivalis (strain ATCC BAA-308 / W83), this protein is Chaperone protein HtpG.